A 307-amino-acid polypeptide reads, in one-letter code: Aspartate carbamoyltransferase catalytic subunit (307 aa).

Positions 59 and 60 each coordinate carbamoyl phosphate. Residue Lys-87 coordinates L-aspartate. The carbamoyl phosphate site is built by Arg-109, His-137, and Gln-140. Positions 173 and 223 each coordinate L-aspartate. Residues Gly-266 and Pro-267 each contribute to the carbamoyl phosphate site.

Belongs to the aspartate/ornithine carbamoyltransferase superfamily. ATCase family. As to quaternary structure, heterododecamer (2C3:3R2) of six catalytic PyrB chains organized as two trimers (C3), and six regulatory PyrI chains organized as three dimers (R2).

The enzyme catalyses carbamoyl phosphate + L-aspartate = N-carbamoyl-L-aspartate + phosphate + H(+). Its pathway is pyrimidine metabolism; UMP biosynthesis via de novo pathway; (S)-dihydroorotate from bicarbonate: step 2/3. Functionally, catalyzes the condensation of carbamoyl phosphate and aspartate to form carbamoyl aspartate and inorganic phosphate, the committed step in the de novo pyrimidine nucleotide biosynthesis pathway. This is Aspartate carbamoyltransferase catalytic subunit from Helicobacter pylori (strain Shi470).